Here is a 307-residue protein sequence, read N- to C-terminus: Coenzyme PQQ synthesis protein B (307 aa).

Belongs to the PqqB family.

It participates in cofactor biosynthesis; pyrroloquinoline quinone biosynthesis. May be involved in the transport of PQQ or its precursor to the periplasm. The chain is Coenzyme PQQ synthesis protein B from Gluconacetobacter diazotrophicus (strain ATCC 49037 / DSM 5601 / CCUG 37298 / CIP 103539 / LMG 7603 / PAl5).